The primary structure comprises 166 residues: MIDSEGFRPNVGIILANDNGQVLWAKRIGHNAWQFPQGGIHFGETPEQALYRELREEVGLLPEHVQIIAQTKGWLRYRLPHRYIRPDSDPVCIGQKQKWFLLKLTASTRHIQLNLSDPPEFDEWQWVSYWYPLGQVVNFKRDVYRKAMMELCMLLPQQQTFEKSSL.

Positions 6 to 149 (GFRPNVGIIL…KRDVYRKAMM (144 aa)) constitute a Nudix hydrolase domain. The Nudix box signature appears at 38-59 (GGIHFGETPEQALYRELREEVG).

Belongs to the Nudix hydrolase family. RppH subfamily. Requires a divalent metal cation as cofactor.

In terms of biological role, accelerates the degradation of transcripts by removing pyrophosphate from the 5'-end of triphosphorylated RNA, leading to a more labile monophosphorylated state that can stimulate subsequent ribonuclease cleavage. In Acinetobacter baylyi (strain ATCC 33305 / BD413 / ADP1), this protein is RNA pyrophosphohydrolase.